The following is a 229-amino-acid chain: Acetylornithine aminotransferase (229 aa).

Residues 95 to 96 (GA) and Phe-122 contribute to the pyridoxal 5'-phosphate site. Arg-125 contacts N(2)-acetyl-L-ornithine. 208–211 (DEIQ) serves as a coordination point for pyridoxal 5'-phosphate.

The protein belongs to the class-III pyridoxal-phosphate-dependent aminotransferase family. ArgD subfamily. As to quaternary structure, homodimer. Requires pyridoxal 5'-phosphate as cofactor.

The protein resides in the cytoplasm. It carries out the reaction N(2)-acetyl-L-ornithine + 2-oxoglutarate = N-acetyl-L-glutamate 5-semialdehyde + L-glutamate. It participates in amino-acid biosynthesis; L-arginine biosynthesis; N(2)-acetyl-L-ornithine from L-glutamate: step 4/4. The chain is Acetylornithine aminotransferase (argD) from Bacillus amyloliquefaciens (Bacillus velezensis).